The following is a 448-amino-acid chain: Probable glycine dehydrogenase (decarboxylating) subunit 1 (448 aa).

The protein belongs to the GcvP family. N-terminal subunit subfamily. As to quaternary structure, the glycine cleavage system is composed of four proteins: P, T, L and H. In this organism, the P 'protein' is a heterodimer of two subunits.

The catalysed reaction is N(6)-[(R)-lipoyl]-L-lysyl-[glycine-cleavage complex H protein] + glycine + H(+) = N(6)-[(R)-S(8)-aminomethyldihydrolipoyl]-L-lysyl-[glycine-cleavage complex H protein] + CO2. The glycine cleavage system catalyzes the degradation of glycine. The P protein binds the alpha-amino group of glycine through its pyridoxal phosphate cofactor; CO(2) is released and the remaining methylamine moiety is then transferred to the lipoamide cofactor of the H protein. This chain is Probable glycine dehydrogenase (decarboxylating) subunit 1, found in Listeria monocytogenes serotype 4b (strain CLIP80459).